Here is a 420-residue protein sequence, read N- to C-terminus: ATP phosphoribosyltransferase regulatory subunit (420 aa).

The protein belongs to the class-II aminoacyl-tRNA synthetase family. HisZ subfamily. As to quaternary structure, heteromultimer composed of HisG and HisZ subunits.

Its subcellular location is the cytoplasm. Its pathway is amino-acid biosynthesis; L-histidine biosynthesis; L-histidine from 5-phospho-alpha-D-ribose 1-diphosphate: step 1/9. In terms of biological role, required for the first step of histidine biosynthesis. May allow the feedback regulation of ATP phosphoribosyltransferase activity by histidine. This Bacillus cereus (strain AH820) protein is ATP phosphoribosyltransferase regulatory subunit.